An 83-amino-acid polypeptide reads, in one-letter code: SPbeta prophage-derived uncharacterized protein YopE (83 aa).

2 helical membrane passes run 5 to 25 and 60 to 80; these read AYFL…FIFV and VIAF…TKLF.

Its subcellular location is the cell membrane. The sequence is that of SPbeta prophage-derived uncharacterized protein YopE (yopE) from Bacillus subtilis (strain 168).